Consider the following 180-residue polypeptide: ADP-ribosylation factor 4 (180 aa).

The N-myristoyl glycine moiety is linked to residue G2. GTP is bound by residues 24–31 (GLDAAGKT), 67–71 (DVGGQ), and 126–129 (NKQD). The residue at position 147 (S147) is a Phosphoserine.

This sequence belongs to the small GTPase superfamily. Arf family. Forms a complex containing RAB11A, ASAP1, RAB3IP, RAP11FIP3 and ARF4; the complex promotes preciliary trafficking; the complex binds to RHO in photoreceptor cells and promotes RHO ciliary transport.

It localises to the golgi apparatus. Its subcellular location is the membrane. Functionally, GTP-binding protein that functions as an allosteric activator of the cholera toxin catalytic subunit, an ADP-ribosyltransferase. Involved in protein trafficking; may modulate vesicle budding and uncoating within the Golgi apparatus. Part of the ciliary targeting complex containing Rab11, ASAP1, Rabin8/RAB3IP, RAB11FIP3 and ARF4, which direct preciliary vesicle trafficking to mother centriole and ciliogenesis initiation. The sequence is that of ADP-ribosylation factor 4 (Arf4) from Mus musculus (Mouse).